Reading from the N-terminus, the 76-residue chain is UPF0291 protein GK1331 (76 aa).

The tract at residues 57–76 is disordered; it reads PSGNDVTPKKLKESQRRRFH. The span at 63–76 shows a compositional bias: basic and acidic residues; sequence TPKKLKESQRRRFH.

It belongs to the UPF0291 family.

Its subcellular location is the cytoplasm. This is UPF0291 protein GK1331 from Geobacillus kaustophilus (strain HTA426).